Here is a 69-residue protein sequence, read N- to C-terminus: Photosystem I reaction center subunit IV (69 aa).

Belongs to the PsaE family.

It localises to the cellular thylakoid membrane. Its function is as follows. Stabilizes the interaction between PsaC and the PSI core, assists the docking of the ferredoxin to PSI and interacts with ferredoxin-NADP oxidoreductase. The protein is Photosystem I reaction center subunit IV of Prochlorococcus marinus (strain MIT 9215).